We begin with the raw amino-acid sequence, 425 residues long: Glutamyl-tRNA reductase (425 aa).

Substrate is bound by residues 49–52, Ser107, 112–114, and Gln118; these read TCNR and EPQ. Residue Cys50 is the Nucleophile of the active site. Residue 187–192 coordinates NADP(+); it reads GAGETI.

This sequence belongs to the glutamyl-tRNA reductase family. In terms of assembly, homodimer.

It catalyses the reaction (S)-4-amino-5-oxopentanoate + tRNA(Glu) + NADP(+) = L-glutamyl-tRNA(Glu) + NADPH + H(+). It participates in porphyrin-containing compound metabolism; protoporphyrin-IX biosynthesis; 5-aminolevulinate from L-glutamyl-tRNA(Glu): step 1/2. Functionally, catalyzes the NADPH-dependent reduction of glutamyl-tRNA(Glu) to glutamate 1-semialdehyde (GSA). This Pseudomonas putida (strain ATCC 47054 / DSM 6125 / CFBP 8728 / NCIMB 11950 / KT2440) protein is Glutamyl-tRNA reductase.